A 384-amino-acid polypeptide reads, in one-letter code: L-lactate dehydrogenase (384 aa).

The FMN hydroxy acid dehydrogenase domain occupies 1–380; that stretch reads MIISSSNDYR…NESCLVEMNK (380 aa). Tyr24 contacts substrate. Positions 106 and 127 each coordinate FMN. Tyr129 provides a ligand contact to substrate. Position 155 (Thr155) interacts with FMN. Arg164 is a substrate binding site. Lys251 lines the FMN pocket. His275 functions as the Proton acceptor in the catalytic mechanism. Residue Arg278 participates in substrate binding. Residue 306–330 coordinates FMN; the sequence is DSGIRNGLDVVRMLALGADSVMLGR.

The protein belongs to the FMN-dependent alpha-hydroxy acid dehydrogenase family. FMN is required as a cofactor.

The protein localises to the cell inner membrane. The enzyme catalyses (S)-lactate + A = pyruvate + AH2. In terms of biological role, catalyzes the conversion of L-lactate to pyruvate. Is coupled to the respiratory chain. This chain is L-lactate dehydrogenase, found in Acinetobacter baylyi (strain ATCC 33305 / BD413 / ADP1).